The following is a 697-amino-acid chain: Long-chain-fatty-acid--CoA ligase 6 (697 aa).

The chain crosses the membrane as a helical; Signal-anchor for type III membrane protein span at residues 25 to 45; sequence LSATTLVSVGALAAVLAYWLT. Topologically, residues 46–697 are cytoplasmic; the sequence is HRPKALQPPC…QIEELYLVSV (652 aa).

It belongs to the ATP-dependent AMP-binding enzyme family. Mg(2+) serves as cofactor.

Its subcellular location is the mitochondrion outer membrane. The protein localises to the peroxisome membrane. It is found in the microsome membrane. The protein resides in the endoplasmic reticulum membrane. It catalyses the reaction a long-chain fatty acid + ATP + CoA = a long-chain fatty acyl-CoA + AMP + diphosphate. The catalysed reaction is (5Z,8Z,11Z,14Z)-eicosatetraenoate + ATP + CoA = (5Z,8Z,11Z,14Z)-eicosatetraenoyl-CoA + AMP + diphosphate. The enzyme catalyses 15-hydroxy-(5Z,8Z,11Z,13E)-eicosatetraenoate + ATP + CoA = 15-hydroxy-(5Z,8Z,11Z,13E)-eicosatetraenoyl-CoA + AMP + diphosphate. It carries out the reaction 12-hydroxy-(5Z,8Z,10E,14Z)-eicosatetraenoate + ATP + CoA = 12-hydroxy-(5Z,8Z,10E,14Z)-eicosatetraenoyl-CoA + AMP + diphosphate. It catalyses the reaction 5-hydroxy-(6E,8Z,11Z,14Z)-eicosatetraenoate + ATP + CoA = 5-hydroxy-(6E,8Z,11Z,14Z)-eicosatetraenoyl-CoA + AMP + diphosphate. The catalysed reaction is hexadecanoate + ATP + CoA = hexadecanoyl-CoA + AMP + diphosphate. The enzyme catalyses (E)-hexadec-2-enoate + ATP + CoA = (2E)-hexadecenoyl-CoA + AMP + diphosphate. In terms of biological role, catalyzes the conversion of long-chain fatty acids to their active form acyl-CoA for both synthesis of cellular lipids, and degradation via beta-oxidation. Plays an important role in fatty acid metabolism in brain and the acyl-CoAs produced may be utilized exclusively for the synthesis of the brain lipid. The sequence is that of Long-chain-fatty-acid--CoA ligase 6 (Acsl6) from Mus musculus (Mouse).